Reading from the N-terminus, the 110-residue chain is Ribonuclease P protein component (110 aa).

This sequence belongs to the RnpA family. Consists of a catalytic RNA component (M1 or rnpB) and a protein subunit.

It carries out the reaction Endonucleolytic cleavage of RNA, removing 5'-extranucleotides from tRNA precursor.. Its function is as follows. RNaseP catalyzes the removal of the 5'-leader sequence from pre-tRNA to produce the mature 5'-terminus. It can also cleave other RNA substrates such as 4.5S RNA. The protein component plays an auxiliary but essential role in vivo by binding to the 5'-leader sequence and broadening the substrate specificity of the ribozyme. The sequence is that of Ribonuclease P protein component from Mesorhizobium japonicum (strain LMG 29417 / CECT 9101 / MAFF 303099) (Mesorhizobium loti (strain MAFF 303099)).